We begin with the raw amino-acid sequence, 67 residues long: Probable Sec-independent protein translocase protein TatE (67 aa).

Residues 4–21 (ISITKLLVVAALVVLLFG) traverse the membrane as a helical segment.

The protein belongs to the TatA/E family. TatE subfamily.

The protein localises to the cell inner membrane. Functionally, part of the twin-arginine translocation (Tat) system that transports large folded proteins containing a characteristic twin-arginine motif in their signal peptide across membranes. TatE shares overlapping functions with TatA. The protein is Probable Sec-independent protein translocase protein TatE of Enterobacter cloacae subsp. cloacae (strain ATCC 13047 / DSM 30054 / NBRC 13535 / NCTC 10005 / WDCM 00083 / NCDC 279-56).